We begin with the raw amino-acid sequence, 100 residues long: Large ribosomal subunit protein uL23 (100 aa).

This sequence belongs to the universal ribosomal protein uL23 family. In terms of assembly, part of the 50S ribosomal subunit. Contacts protein L29, and trigger factor when it is bound to the ribosome.

Functionally, one of the early assembly proteins it binds 23S rRNA. One of the proteins that surrounds the polypeptide exit tunnel on the outside of the ribosome. Forms the main docking site for trigger factor binding to the ribosome. The polypeptide is Large ribosomal subunit protein uL23 (Shewanella frigidimarina (strain NCIMB 400)).